A 241-amino-acid polypeptide reads, in one-letter code: 2-heptyl-1-hydroxyquinolin-4(1H)-one methyltransferase (241 aa).

This sequence belongs to the methyltransferase superfamily. Monomer.

Its subcellular location is the cytoplasm. It catalyses the reaction 2-heptyl-1-hydroxy-4(1H)-quinolinone + S-adenosyl-L-methionine = 2-heptyl-1-methoxy-4(1H)-quinolinone + S-adenosyl-L-homocysteine + H(+). Involved in cellular response to chemical stress and may contribute to resistance toward antimicrobial natural compounds as well as drugs. Catalyzes the methylation and detoxification of the P.aeruginosa toxin 2-heptyl-1-hydroxy-4(1H)-quinolinone (HQNO) to 2-heptyl-1-methoxy-4(1H)-quinolinone (HMOQ). The chain is 2-heptyl-1-hydroxyquinolin-4(1H)-one methyltransferase from Mycobacterium bovis (strain BCG / Pasteur 1173P2).